The chain runs to 201 residues: Ras-related protein Rab-10 (201 aa).

A GTP-binding site is contributed by 16-23; it reads GDSGVGKT. An Effector region motif is present at residues 38–46; that stretch reads FISTIGIDF. GTP-binding positions include 64-68, 122-125, and 152-154; these read DTAGQ, NKCD, and SAK. The segment at 175-201 is disordered; it reads PDSTDEQSRDTVNPVQPQRQSSSGGCC. Residues 184-201 show a composition bias toward polar residues; the sequence is DTVNPVQPQRQSSSGGCC. 2 S-geranylgeranyl cysteine lipidation sites follow: Cys-200 and Cys-201.

The protein belongs to the small GTPase superfamily. Rab family. As to quaternary structure, interacts (GTP-bound form) with ehbp-1 (via C-terminal coiled coil). Interacts (GTP-bound form) with cnt-1 (via C-terminal ankyrin repeat). Interacts (GTP-bound form) with rab-5 GAP, tbc-2 (via putative coiled coil domain). Interacts (GTP-bound form) with amph-1. In terms of tissue distribution, almost ubiquitously expressed. Expressed in intestine, hypodermis, seam cells, body-wall muscles, many neurons, oviduct sheath cell, spermatheca, coelomocytes and pharyngeal and nerve ring.

It is found in the early endosome membrane. The protein localises to the late endosome membrane. It localises to the golgi apparatus membrane. Its subcellular location is the endosome membrane. The catalysed reaction is GTP + H2O = GDP + phosphate + H(+). Rab activation is generally mediated by a guanine exchange factor (GEF), while inactivation through hydrolysis of bound GTP is catalyzed by a GTPase activating protein (GAP). Tbc-4 is a likely GAP of this rab. Denn-4 is a putative GEF of this rab. The small GTPases Rab are key regulators of intracellular membrane trafficking, from the formation of transport vesicles to their fusion with membranes. Rabs cycle between an inactive GDP-bound form and an active GTP-bound form that is able to recruit to membranes different set of downstream effectors directly responsible for vesicle formation, movement, tethering and fusion. Required for basolateral endocytic recycling, the return of macromolecules and fluid from endosomes to the plasma membrane, in polarized epithelial cells of the intestine upstream of rme-1. Involved in the formation of the endosomal tubular network that is required for basolateral recycling of clathrin-independent endocytic cargo such as daf-4 in the intestine. Required for the recruitment of cnt-1 effector to endosomal membranes in the intestinal epithelium, which is important for the regulation of levels of endosomal phosphatidylinositol-4,5-bisphosphate, a key phosphoinositide in membrane traffic, and for the recruitment of endosomal membrane-bending proteins, rme-1 and sdpn-1. Recruits the rab-5 GTPase-activating protein tbc-2 to endosomes where it then inactivates rab-5 resulting in removal of rab-5 from membranes, which is necessary for cargo transport from early endosomes to recycling endosomes in the basolateral intestine. Regulates recycling of synaptic membrane AMPA glutamate receptor, glr-1, from intracellular endosomal compartments back to synapses in a cholesterol-dependent endocytosis pathway functioning after clathrin-independent endocytosis in command interneurons. Regulates neuropeptide release from dense core vesicles (DCVs) of cholinergic motoneurons in cooperation with rab-5. They reciprocally recruit each other's inactivating GAP molecule leading to local exclusion of one or the other rab protein at the Golgi-endosomal interphase at an essential stage during DCV sorting. Regulates membrane trafficking of membranes and dendrite proteins from the Golgi and/or endosomal compartments to plasma membrane during dendrite morphogenesis together with the exocyst complex in the multi-dendritic PVD sensory neurons acting in a cell-autonomous manner and requiring its GTPase activity. Functions cell-autonomously together with the exocyst complex to regulate dendrite morphogenesis and anterior-posterior patterning of the PVD neurons dendritic arbor by balancing the anterograde and retrograde transport via molecular motors unc-116 (kinesin heavy chain) and dhc-1 (dynein heavy chain) to appropriately transport branching factors, such as dma-1, to the specific subcellular regions of the developing dendrite in its GTPase activity-dependent manner. The protein is Ras-related protein Rab-10 of Caenorhabditis elegans.